Reading from the N-terminus, the 449-residue chain is MRPKAVWEPEYHRVFVDLCVEQTMLGNKPGTHFSKEGWRNILISFQEQTGAMYDRMQLKNHWDTMSRQWKIWRRLVETSFMNWNPESNRFRATDDDWANYLQENPDAGQYRLSVPHDLKKLEILFAGCNVEVKNDEVSGVRKRRRSCYEEEDEDNQSMCSSSNPQTKGYWSPSTHKLFLDLLVQETLKGNRPDTHFNKEGWKTILGTINENTGLGYTRPQLKNHWDCTRKAWKIWCQLVGASSMKWDPESRSFGATEEEWRIYIRENPRAGQFRHKEVPHADQLAIIFNGVIEPGETYTPPSRSRKKLLHNRSESPQWRDTTPLSKMHVDEAETSRQNGCYAESQEDRIDSENAQPLDDMKLMNDVMLQESPVFVEIESAKPMYSIGECIKSLNAIEEVEQGSELYMFALDLFLKREYREIFLELKKPSLRIAWLQRLQSTSFPIPTTT.

The region spanning 162–225 is the Myb-like domain; the sequence is SNPQTKGYWS…YTRPQLKNHW (64 aa). The disordered stretch occupies residues 297-324; that stretch reads TYTPPSRSRKKLLHNRSESPQWRDTTPL. The segment covering 314-324 has biased composition (polar residues); that stretch reads ESPQWRDTTPL.

As to quaternary structure, interacts with RPL10A. As to expression, expressed in seedlings, leaves, roots, stems and flowers.

The protein resides in the nucleus. Its function is as follows. Transcriptional repressor that associates with ribosomal protein promoters. In Arabidopsis thaliana (Mouse-ear cress), this protein is L10-interacting MYB domain-containing protein.